Reading from the N-terminus, the 42-residue chain is uncharacterized protein (42 aa).

Its subcellular location is the plastid. The protein localises to the chloroplast. This is an uncharacterized protein from Diacronema lutheri (Unicellular marine alga).